The primary structure comprises 282 residues: 4-hydroxy-3-methylbut-2-enyl diphosphate reductase (282 aa).

Cysteine 12 lines the [4Fe-4S] cluster pocket. (2E)-4-hydroxy-3-methylbut-2-enyl diphosphate-binding residues include histidine 40 and histidine 72. Dimethylallyl diphosphate is bound by residues histidine 40 and histidine 72. Isopentenyl diphosphate-binding residues include histidine 40 and histidine 72. Cysteine 94 is a binding site for [4Fe-4S] cluster. Histidine 122 contacts (2E)-4-hydroxy-3-methylbut-2-enyl diphosphate. Histidine 122 contacts dimethylallyl diphosphate. An isopentenyl diphosphate-binding site is contributed by histidine 122. Glutamate 124 (proton donor) is an active-site residue. Threonine 160 provides a ligand contact to (2E)-4-hydroxy-3-methylbut-2-enyl diphosphate. Cysteine 188 contacts [4Fe-4S] cluster. Residues serine 216, asparagine 218, and serine 260 each contribute to the (2E)-4-hydroxy-3-methylbut-2-enyl diphosphate site. Dimethylallyl diphosphate contacts are provided by serine 216, asparagine 218, and serine 260. Isopentenyl diphosphate-binding residues include serine 216, asparagine 218, and serine 260.

It belongs to the IspH family. It depends on [4Fe-4S] cluster as a cofactor.

It catalyses the reaction isopentenyl diphosphate + 2 oxidized [2Fe-2S]-[ferredoxin] + H2O = (2E)-4-hydroxy-3-methylbut-2-enyl diphosphate + 2 reduced [2Fe-2S]-[ferredoxin] + 2 H(+). The enzyme catalyses dimethylallyl diphosphate + 2 oxidized [2Fe-2S]-[ferredoxin] + H2O = (2E)-4-hydroxy-3-methylbut-2-enyl diphosphate + 2 reduced [2Fe-2S]-[ferredoxin] + 2 H(+). Its pathway is isoprenoid biosynthesis; dimethylallyl diphosphate biosynthesis; dimethylallyl diphosphate from (2E)-4-hydroxy-3-methylbutenyl diphosphate: step 1/1. It participates in isoprenoid biosynthesis; isopentenyl diphosphate biosynthesis via DXP pathway; isopentenyl diphosphate from 1-deoxy-D-xylulose 5-phosphate: step 6/6. Functionally, catalyzes the conversion of 1-hydroxy-2-methyl-2-(E)-butenyl 4-diphosphate (HMBPP) into a mixture of isopentenyl diphosphate (IPP) and dimethylallyl diphosphate (DMAPP). Acts in the terminal step of the DOXP/MEP pathway for isoprenoid precursor biosynthesis. This is 4-hydroxy-3-methylbut-2-enyl diphosphate reductase from Geobacter metallireducens (strain ATCC 53774 / DSM 7210 / GS-15).